The following is a 215-amino-acid chain: Pyridoxine/pyridoxamine 5'-phosphate oxidase (215 aa).

Substrate contacts are provided by residues R9 to Y12 and K67. FMN is bound by residues R62–K67, F77–T78, K84, and Q106. Residues Y124, R128, and S132 each contribute to the substrate site. FMN contacts are provided by residues Q141–S142 and W186. R192–H194 lines the substrate pocket. An FMN-binding site is contributed by R196.

Belongs to the pyridoxamine 5'-phosphate oxidase family. In terms of assembly, homodimer. FMN serves as cofactor.

It carries out the reaction pyridoxamine 5'-phosphate + O2 + H2O = pyridoxal 5'-phosphate + H2O2 + NH4(+). It catalyses the reaction pyridoxine 5'-phosphate + O2 = pyridoxal 5'-phosphate + H2O2. It functions in the pathway cofactor metabolism; pyridoxal 5'-phosphate salvage; pyridoxal 5'-phosphate from pyridoxamine 5'-phosphate: step 1/1. The protein operates within cofactor metabolism; pyridoxal 5'-phosphate salvage; pyridoxal 5'-phosphate from pyridoxine 5'-phosphate: step 1/1. Functionally, catalyzes the oxidation of either pyridoxine 5'-phosphate (PNP) or pyridoxamine 5'-phosphate (PMP) into pyridoxal 5'-phosphate (PLP). This chain is Pyridoxine/pyridoxamine 5'-phosphate oxidase, found in Chromohalobacter salexigens (strain ATCC BAA-138 / DSM 3043 / CIP 106854 / NCIMB 13768 / 1H11).